The sequence spans 135 residues: MKCGKIKADIMDDGGTNMKIYVHTAEKKENGWYFLCEASLQGLQAKRHMLVDSDACAFAYILEAADAFVYVIMPKEVWGAIKEALRTNEPVFLVGNDATIELEGIHEEVAYLIENIAGNANYGEEMEQAVTAFFE.

This sequence belongs to the UPF0738 family.

The chain is UPF0738 protein Aflv_2116 from Anoxybacillus flavithermus (strain DSM 21510 / WK1).